Here is a 307-residue protein sequence, read N- to C-terminus: tRNA dimethylallyltransferase 1 (307 aa).

11–18 (GPTASGKT) lines the ATP pocket. 13–18 (TASGKT) provides a ligand contact to substrate. Interaction with substrate tRNA stretches follow at residues 36–39 (DSRQ) and 159–163 (QRAIR).

This sequence belongs to the IPP transferase family. As to quaternary structure, monomer. It depends on Mg(2+) as a cofactor.

The enzyme catalyses adenosine(37) in tRNA + dimethylallyl diphosphate = N(6)-dimethylallyladenosine(37) in tRNA + diphosphate. Catalyzes the transfer of a dimethylallyl group onto the adenine at position 37 in tRNAs that read codons beginning with uridine, leading to the formation of N6-(dimethylallyl)adenosine (i(6)A). This chain is tRNA dimethylallyltransferase 1, found in Parabacteroides distasonis (strain ATCC 8503 / DSM 20701 / CIP 104284 / JCM 5825 / NCTC 11152).